Here is a 46-residue protein sequence, read N- to C-terminus: MSYVCLICGAEVDIDTEKSLVQCTNCGGRILIKPRPLAKKKRVKAI.

Residues C8, C23, and C26 each coordinate Zn(2+).

This sequence belongs to the archaeal Rpo12/eukaryotic RPC10 RNA polymerase subunit family. Part of the RNA polymerase complex. It depends on Zn(2+) as a cofactor.

The protein resides in the cytoplasm. It catalyses the reaction RNA(n) + a ribonucleoside 5'-triphosphate = RNA(n+1) + diphosphate. In terms of biological role, DNA-dependent RNA polymerase (RNAP) catalyzes the transcription of DNA into RNA using the four ribonucleoside triphosphates as substrates. In Archaeoglobus fulgidus (strain ATCC 49558 / DSM 4304 / JCM 9628 / NBRC 100126 / VC-16), this protein is DNA-directed RNA polymerase subunit Rpo12.